A 92-amino-acid polypeptide reads, in one-letter code: UPF0298 protein ABC2380 (92 aa).

The protein belongs to the UPF0298 family.

The protein localises to the cytoplasm. The chain is UPF0298 protein ABC2380 from Shouchella clausii (strain KSM-K16) (Alkalihalobacillus clausii).